Reading from the N-terminus, the 466-residue chain is Cysteine--tRNA ligase (466 aa).

Cysteine 28 serves as a coordination point for Zn(2+). Positions 30-40 (PTVYNYIHIGN) match the 'HIGH' region motif. Positions 208, 233, and 237 each coordinate Zn(2+). The short motif at 265 to 269 (KMSKS) is the 'KMSKS' region element. Lysine 268 provides a ligand contact to ATP. Serine 269 carries the post-translational modification Phosphoserine.

This sequence belongs to the class-I aminoacyl-tRNA synthetase family. As to quaternary structure, monomer. Zn(2+) is required as a cofactor.

It localises to the cytoplasm. It catalyses the reaction tRNA(Cys) + L-cysteine + ATP = L-cysteinyl-tRNA(Cys) + AMP + diphosphate. The protein is Cysteine--tRNA ligase of Shouchella clausii (strain KSM-K16) (Alkalihalobacillus clausii).